Reading from the N-terminus, the 379-residue chain is MPAVTYEHIKTCKQSGARLGIVHTPHGSFETPMFMPVGTKATVKTMSPEELRNIEAKIILGNTYHLWLQPGNDIIKHAGGLHKFMNWDGPILTDSGGFQVFSLSNLRKISEEGVEFRHHTNGSKLFLSPEKSMQIQNDLGSDIMMAFDECPPMPAEYDYVKDSIERTTRWAARCLKAHQRPGDQALFGIIQGGEYKDLREQSAKELVSLDFPGYAIGGLSVGEPKPVMYDMVEHTEQFMPKDKPRYLMGVGSPDALIECSIRGMDMFDCVLPTRIARNGTCMTSNGRLVVKNAKYADDLRPLDEQCDCYTCQHYTRAYIRHLVKAEETFGIRLTTIHNLHFLLKLMEDIRQAIREDRLLDFKDEFFEQYGLNVENPKNF.

The active-site Proton acceptor is Asp-94. Substrate-binding positions include Asp-94–Phe-98, Asp-148, Gln-191, and Gly-218. An RNA binding region spans residues Gly-249–Ala-255. Asp-268 (nucleophile) is an active-site residue. The RNA binding; important for wobble base 34 recognition stretch occupies residues Thr-273–Arg-277. Residues Cys-306, Cys-308, Cys-311, and His-337 each contribute to the Zn(2+) site.

The protein belongs to the queuine tRNA-ribosyltransferase family. As to quaternary structure, homodimer. Within each dimer, one monomer is responsible for RNA recognition and catalysis, while the other monomer binds to the replacement base PreQ1. Requires Zn(2+) as cofactor.

It catalyses the reaction 7-aminomethyl-7-carbaguanine + guanosine(34) in tRNA = 7-aminomethyl-7-carbaguanosine(34) in tRNA + guanine. It participates in tRNA modification; tRNA-queuosine biosynthesis. In terms of biological role, catalyzes the base-exchange of a guanine (G) residue with the queuine precursor 7-aminomethyl-7-deazaguanine (PreQ1) at position 34 (anticodon wobble position) in tRNAs with GU(N) anticodons (tRNA-Asp, -Asn, -His and -Tyr). Catalysis occurs through a double-displacement mechanism. The nucleophile active site attacks the C1' of nucleotide 34 to detach the guanine base from the RNA, forming a covalent enzyme-RNA intermediate. The proton acceptor active site deprotonates the incoming PreQ1, allowing a nucleophilic attack on the C1' of the ribose to form the product. After dissociation, two additional enzymatic reactions on the tRNA convert PreQ1 to queuine (Q), resulting in the hypermodified nucleoside queuosine (7-(((4,5-cis-dihydroxy-2-cyclopenten-1-yl)amino)methyl)-7-deazaguanosine). The chain is Queuine tRNA-ribosyltransferase from Staphylococcus epidermidis (strain ATCC 35984 / DSM 28319 / BCRC 17069 / CCUG 31568 / BM 3577 / RP62A).